Reading from the N-terminus, the 512-residue chain is Maturase K (512 aa).

This sequence belongs to the intron maturase 2 family. MatK subfamily.

It is found in the plastid. Its subcellular location is the chloroplast. Its function is as follows. Usually encoded in the trnK tRNA gene intron. Probably assists in splicing its own and other chloroplast group II introns. The polypeptide is Maturase K (Oenothera glazioviana (Large-flowered evening primrose)).